Reading from the N-terminus, the 480-residue chain is Trigger factor (480 aa).

Positions 169–264 constitute a PPIase FKBP-type domain; it reads GDIAVVDFKG…LKELKEKELP (96 aa). The tract at residues 441 to 480 is disordered; it reads PEGSLSPAEETEAAESDADADVSQTEQENSEPSTTEVTEG. Acidic residues predominate over residues 449–460; the sequence is EETEAAESDADA. Polar residues predominate over residues 462–480; that stretch reads VSQTEQENSEPSTTEVTEG.

Belongs to the FKBP-type PPIase family. Tig subfamily.

Its subcellular location is the cytoplasm. The enzyme catalyses [protein]-peptidylproline (omega=180) = [protein]-peptidylproline (omega=0). Its function is as follows. Involved in protein export. Acts as a chaperone by maintaining the newly synthesized protein in an open conformation. Functions as a peptidyl-prolyl cis-trans isomerase. The chain is Trigger factor from Nostoc punctiforme (strain ATCC 29133 / PCC 73102).